A 119-amino-acid chain; its full sequence is Large ribosomal subunit protein bL20 (119 aa).

It belongs to the bacterial ribosomal protein bL20 family.

Functionally, binds directly to 23S ribosomal RNA and is necessary for the in vitro assembly process of the 50S ribosomal subunit. It is not involved in the protein synthesizing functions of that subunit. In Teredinibacter turnerae (strain ATCC 39867 / T7901), this protein is Large ribosomal subunit protein bL20.